Reading from the N-terminus, the 220-residue chain is Splicing factor U2AF 26 kDa subunit (220 aa).

At Ala2 the chain carries N-acetylalanine. The C3H1-type 1 zinc finger occupies 12–40 (EKDKVNCSFYFKIGACRHGDRCSRLHNKP). The 83-residue stretch at 65 to 147 (SHCHVSDVEV…QAVHAELSPV (83 aa)) folds into the RRM domain. Residues 149–176 (DFRESCCRQYEMGECTRGGFCNFMHLRP) form a C3H1-type 2 zinc finger. Positions 186 to 220 (YGRGPRHRSPPRSHTGHRPRERNRRRSPDHRHGRF) are disordered. The span at 189-220 (GPRHRSPPRSHTGHRPRERNRRRSPDHRHGRF) shows a compositional bias: basic residues.

Belongs to the splicing factor SR family. Interacts with GFI1, U2AF2 and C1QBP. Isoform 3 interacts with PER1. Post-translationally, isoform 3 is rapidly degraded by a proteasome-mediated degradation pathway. As to expression, ubiquitous. Highly expressed in the brain.

The protein localises to the nucleus. The protein resides in the nucleus speckle. Its subcellular location is the cytoplasm. RNA-binding protein that function as a pre-mRNA splicing factor. Plays a critical role in both constitutive and enhancer-dependent splicing by mediating protein-protein interactions and protein-RNA interactions required for accurate 3'-splice site selection. It can functionally substitute for U2AF1 in constitutive splicing and enhancer-dependent splicing. Acts by enhancing the binding of U2AF2 to weak pyrimidine tracts. Also participates in the regulation of alternative pre-mRNA splicing. Activates exon 5 skipping of PTPRC during T-cell activation; an event reversed by GFI1. Binds to RNA at the AG dinucleotide at the 3'-splice site. Shows a preference for AGC or AGA. Alternative splicing of U2AF1L4 may play a role in connecting the circadian rhythm to changing external cues: may provide a circadian buffering system in central and periphery clocks that allows synchronized adaption to clock-resetting stimuli in order to prevent potentially pathogenic desynchronization. This Mus musculus (Mouse) protein is Splicing factor U2AF 26 kDa subunit (U2af1l4).